A 391-amino-acid chain; its full sequence is Multidrug resistance protein MdtL (391 aa).

12 consecutive transmembrane segments (helical) span residues 4–24 (FLICSFALVLLYPAGIDMYLV), 42–62 (IAFSVYLAGMAAAMLFAGKVA), 69–89 (PVAIPGAALFIIASVFCSLAE), 93–113 (LFLAGRFLQGLGAGCCYVVAF), 134–154 (GITCIIPVLAPVLGHLIMLNF), 158–178 (SLFWTMAIMGVAVLMLSLFIL), 203–222 (FFLSRVVITTLSVSVILTFV), 245–265 (ALTAGVSMTVSFSTPFALGIF), 269–289 (TLMITSQVLFLAAGITLAVSP), 293–313 (VSLFGITLICAGFSVGFGVAM), 331–351 (LGIAQVCGSSLWIWLAAVVGI), and 356–376 (MLIGILIACSIVSLLLIMFVA).

It belongs to the major facilitator superfamily. DHA1 family. MdtL (TC 2.A.1.2.22) subfamily.

The protein localises to the cell inner membrane. In terms of biological role, confers resistance to chloramphenicol. This Escherichia coli O81 (strain ED1a) protein is Multidrug resistance protein MdtL.